Here is a 598-residue protein sequence, read N- to C-terminus: Vanadium-dependent bromoperoxidase (598 aa).

Ca(2+) contacts are provided by F361, Q363, D365, D368, and Q370. Residues K400 and R408 each coordinate vanadate. H480 is an active-site residue. Vanadate-binding residues include S485, G486, H487, R547, and H553. The active site involves H487.

This sequence belongs to the vanadium-dependent haloperoxidase family. In terms of assembly, homododecamer. Ca(2+) serves as cofactor. Requires vanadate as cofactor.

The enzyme catalyses RH + Br(-) + H2O2 = RBr + 2 H2O.. Catalyzes the halogenation of organic substrates in the presence of hydrogen peroxide. The sequence is that of Vanadium-dependent bromoperoxidase from Corallina pilulifera (Red coralline alga).